The sequence spans 182 residues: Putative colanic acid biosynthesis acetyltransferase WcaF (182 aa).

It belongs to the transferase hexapeptide repeat family.

It participates in slime biogenesis; slime polysaccharide biosynthesis. In Shigella flexneri, this protein is Putative colanic acid biosynthesis acetyltransferase WcaF (wcaF).